Here is a 353-residue protein sequence, read N- to C-terminus: Photosystem II D2 protein (353 aa).

Thr-2 is subject to N-acetylthreonine. Residue Thr-2 is modified to Phosphothreonine. Residues 41–61 form a helical membrane-spanning segment; sequence CAYFALGGWFTGTTFVTSWYT. His-118 is a chlorophyll a binding site. The helical transmembrane segment at 125 to 141 threads the bilayer; that stretch reads GFMLRQFELARSVQLRP. Pheophytin a is bound by residues Gln-130 and Asn-143. A helical membrane pass occupies residues 153 to 166; sequence VFVSVFLIYPLGQS. His-198 is a chlorophyll a binding site. Residues 208–228 form a helical membrane-spanning segment; sequence AALLCAIHGATVENTLFEDGD. A plastoquinone-binding residues include His-215 and Phe-262. His-215 lines the Fe cation pocket. Residue His-269 coordinates Fe cation. The chain crosses the membrane as a helical span at residues 279 to 295; that stretch reads GLWMSALGVVGLALNLR.

Belongs to the reaction center PufL/M/PsbA/D family. In terms of assembly, PSII is composed of 1 copy each of membrane proteins PsbA, PsbB, PsbC, PsbD, PsbE, PsbF, PsbH, PsbI, PsbJ, PsbK, PsbL, PsbM, PsbT, PsbX, PsbY, PsbZ, Psb30/Ycf12, at least 3 peripheral proteins of the oxygen-evolving complex and a large number of cofactors. It forms dimeric complexes. The D1/D2 heterodimer binds P680, chlorophylls that are the primary electron donor of PSII, and subsequent electron acceptors. It shares a non-heme iron and each subunit binds pheophytin, quinone, additional chlorophylls, carotenoids and lipids. There is also a Cl(-1) ion associated with D1 and D2, which is required for oxygen evolution. The PSII complex binds additional chlorophylls, carotenoids and specific lipids. is required as a cofactor.

Its subcellular location is the plastid. It is found in the chloroplast thylakoid membrane. It carries out the reaction 2 a plastoquinone + 4 hnu + 2 H2O = 2 a plastoquinol + O2. Functionally, photosystem II (PSII) is a light-driven water:plastoquinone oxidoreductase that uses light energy to abstract electrons from H(2)O, generating O(2) and a proton gradient subsequently used for ATP formation. It consists of a core antenna complex that captures photons, and an electron transfer chain that converts photonic excitation into a charge separation. The D1/D2 (PsbA/PsbD) reaction center heterodimer binds P680, the primary electron donor of PSII as well as several subsequent electron acceptors. D2 is needed for assembly of a stable PSII complex. The polypeptide is Photosystem II D2 protein (Ranunculus macranthus (Large buttercup)).